The sequence spans 173 residues: 2-C-methyl-D-erythritol 2,4-cyclodiphosphate synthase (173 aa).

Residues Asp17 and His19 each coordinate a divalent metal cation. 4-CDP-2-C-methyl-D-erythritol 2-phosphate-binding positions include 17-19 (DVH) and 49-50 (HS). Position 57 (His57) interacts with a divalent metal cation. Residues 76 to 80 (FPNTD), 147 to 150 (TTTE), Phe154, and Arg157 contribute to the 4-CDP-2-C-methyl-D-erythritol 2-phosphate site.

Belongs to the IspF family. Homotrimer. The cofactor is a divalent metal cation.

It carries out the reaction 4-CDP-2-C-methyl-D-erythritol 2-phosphate = 2-C-methyl-D-erythritol 2,4-cyclic diphosphate + CMP. It participates in isoprenoid biosynthesis; isopentenyl diphosphate biosynthesis via DXP pathway; isopentenyl diphosphate from 1-deoxy-D-xylulose 5-phosphate: step 4/6. Functionally, involved in the biosynthesis of isopentenyl diphosphate (IPP) and dimethylallyl diphosphate (DMAPP), two major building blocks of isoprenoid compounds. Catalyzes the conversion of 4-diphosphocytidyl-2-C-methyl-D-erythritol 2-phosphate (CDP-ME2P) to 2-C-methyl-D-erythritol 2,4-cyclodiphosphate (ME-CPP) with a corresponding release of cytidine 5-monophosphate (CMP). This chain is 2-C-methyl-D-erythritol 2,4-cyclodiphosphate synthase, found in Ehrlichia chaffeensis (strain ATCC CRL-10679 / Arkansas).